The chain runs to 266 residues: 3-deoxy-manno-octulosonate cytidylyltransferase 1 (266 aa).

It belongs to the KdsB family.

The protein localises to the cytoplasm. The catalysed reaction is 3-deoxy-alpha-D-manno-oct-2-ulosonate + CTP = CMP-3-deoxy-beta-D-manno-octulosonate + diphosphate. Its pathway is nucleotide-sugar biosynthesis; CMP-3-deoxy-D-manno-octulosonate biosynthesis; CMP-3-deoxy-D-manno-octulosonate from 3-deoxy-D-manno-octulosonate and CTP: step 1/1. It participates in bacterial outer membrane biogenesis; lipopolysaccharide biosynthesis. Functionally, activates KDO (a required 8-carbon sugar) for incorporation into bacterial lipopolysaccharide in Gram-negative bacteria. The protein is 3-deoxy-manno-octulosonate cytidylyltransferase 1 of Paraburkholderia phytofirmans (strain DSM 17436 / LMG 22146 / PsJN) (Burkholderia phytofirmans).